A 103-amino-acid chain; its full sequence is Histone H4 type VIII (103 aa).

Gly residues predominate over residues Met-1–Gly-14. The interval Met-1–Arg-20 is disordered. At Ser-2 the chain carries N-acetylserine. At Ser-2 the chain carries Phosphoserine. Arg-4 carries the asymmetric dimethylarginine; by PRMT1; alternate modification. Citrulline; alternate is present on Arg-4. The residue at position 4 (Arg-4) is an Omega-N-methylarginine; by PRMT1; alternate. Arg-4 carries the post-translational modification Symmetric dimethylarginine; by PRMT5 and PRMT7; alternate. N6-(2-hydroxyisobutyryl)lysine; alternate occurs at positions 6, 9, 13, and 17. Lys-6 carries the post-translational modification N6-acetyl-N6-methyllysine; alternate. 4 positions are modified to N6-acetyllysine: Lys-6, Lys-9, Lys-13, and Lys-17. 4 positions are modified to N6-butyryllysine; alternate: Lys-6, Lys-9, Lys-13, and Lys-17. Lys-6 is subject to N6-glutaryllysine; alternate. Residues Lys-6, Lys-9, Lys-13, and Lys-17 each carry the N6-lactoyllysine; alternate modification. Lys-9 carries the post-translational modification N6-propionyllysine; alternate. Residue Lys-13 is modified to N6-acetyl-N6-methyllysine; alternate. Lys-13 is modified (N6-glutaryllysine; alternate). The residue at position 13 (Lys-13) is an N6-methyllysine; alternate. An N6-propionyllysine; alternate modification is found at Lys-17. At Lys-21 the chain carries N6-methyllysine; alternate. Lys-21 carries the N6,N6,N6-trimethyllysine; alternate modification. At Lys-21 the chain carries N6,N6-dimethyllysine; alternate. N6-(2-hydroxyisobutyryl)lysine; alternate occurs at positions 32 and 45. At Lys-32 the chain carries N6-acetyllysine. 2 positions are modified to N6-butyryllysine; alternate: Lys-32 and Lys-45. The residue at position 32 (Lys-32) is an N6-glutaryllysine; alternate. Lys-32 is modified (N6-lactoyllysine; alternate). 2 positions are modified to N6-propionyllysine; alternate: Lys-32 and Lys-45. Lys-32 carries the N6-succinyllysine; alternate modification. Lys-32 is covalently cross-linked (Glycyl lysine isopeptide (Lys-Gly) (interchain with G-Cter in UFM1); alternate). Ser-48 bears the Phosphoserine mark. A Phosphotyrosine modification is found at Tyr-52. Lys-60 carries the post-translational modification N6-acetyllysine. Residues Lys-60, Lys-78, and Lys-80 each carry the N6-glutaryllysine; alternate modification. The residue at position 60 (Lys-60) is an N6-(2-hydroxyisobutyryl)lysine. N6-(2-hydroxyisobutyryl)lysine; alternate is present on residues Lys-78 and Lys-80. N6-butyryllysine; alternate occurs at positions 78 and 80. N6-lactoyllysine; alternate is present on Lys-78. 2 positions are modified to N6-propionyllysine; alternate: Lys-78 and Lys-80. At Lys-78 the chain carries N6-succinyllysine. The residue at position 80 (Lys-80) is an N6-acetyllysine. Position 89 is a phosphotyrosine (Tyr-89). An N6-(2-hydroxyisobutyryl)lysine; alternate modification is found at Lys-92. Residue Lys-92 is modified to N6-butyryllysine; alternate. Position 92 is an N6-glutaryllysine; alternate (Lys-92). At Lys-92 the chain carries N6-lactoyllysine; alternate. Lys-92 carries the N6-propionyllysine; alternate modification. Residue Lys-92 is modified to N6-succinyllysine; alternate. Lys-92 is modified (N6-acetyllysine; alternate). Residue Lys-92 forms a Glycyl lysine isopeptide (Lys-Gly) (interchain with G-Cter in ubiquitin); alternate linkage.

This sequence belongs to the histone H4 family. In terms of assembly, the nucleosome is a histone octamer containing two molecules each of H2A, H2B, H3 and H4 assembled in one H3-H4 heterotetramer and two H2A-H2B heterodimers. The octamer wraps approximately 147 bp of DNA. In terms of processing, acetylation at Lys-6 (H4K5ac), Lys-9 (H4K8ac), Lys-13 (H4K12ac) and Lys-17 (H4K16ac) occurs in coding regions of the genome but not in heterochromatin. Post-translationally, citrullination at Arg-4 (H4R3ci) by PADI4 impairs methylation. Monomethylation and asymmetric dimethylation at Arg-4 (H4R3me1 and H4R3me2a, respectively) by PRMT1 favors acetylation at Lys-9 (H4K8ac) and Lys-13 (H4K12ac). Demethylation is performed by JMJD6. Symmetric dimethylation on Arg-4 (H4R3me2s) by the PRDM1/PRMT5 complex may play a crucial role in the germ-cell lineage. In terms of processing, monomethylated, dimethylated or trimethylated at Lys-21 (H4K20me1, H4K20me2, H4K20me3). Monomethylation is performed by KMT5A/SET8. Trimethylation is performed by KMT5B and KMT5C and induces gene silencing. Monomethylated at Lys-13 (H4K12me1) by N6AMT1; H4K12me1 modification is present at the promoters of numerous genes encoding cell cycle regulators. Post-translationally, acetyl-methylated at Lys-6 and Lys-13 (H4K5acme and H4K12acme, respectively), acetyl-methylation is an epigenetic mark of active chromatin associated with increased transcriptional initiation. Acetyl-methylation is formed by acetylation by EP300/p300 of lysine residues that are already monomethylated on the same side chain. H4K5acme and H4K12acme marks specifically bind BRD2. Ubiquitinated by the CUL4-DDB-RBX1 complex in response to ultraviolet irradiation. This may weaken the interaction between histones and DNA and facilitate DNA accessibility to repair proteins. Monoubiquitinated at Lys-92 of histone H4 (H4K91ub1) in response to DNA damage. The exact role of H4K91ub1 in DNA damage response is still unclear but it may function as a licensing signal for additional histone H4 post-translational modifications such as H4 Lys-21 methylation (H4K20me). In terms of processing, sumoylated, which is associated with transcriptional repression. Post-translationally, butyrylation of histones marks active promoters and competes with histone acetylation. Glutarylation at Lys-92 (H4K91glu) destabilizes nucleosomes by promoting dissociation of the H2A-H2B dimers from nucleosomes. In terms of processing, ufmylated; monofmylated by UFL1 at Lys-32 (H4K31Ufm1) in response to DNA damage. Post-translationally, lactylated in macrophages by EP300/P300 by using lactoyl-CoA directly derived from endogenous or exogenous lactate, leading to stimulates gene transcription. Delactylated by SIRT3 at Lys-17 (H4K16la).

Its subcellular location is the nucleus. It localises to the chromosome. Core component of nucleosome. Nucleosomes wrap and compact DNA into chromatin, limiting DNA accessibility to the cellular machineries which require DNA as a template. Histones thereby play a central role in transcription regulation, DNA repair, DNA replication and chromosomal stability. DNA accessibility is regulated via a complex set of post-translational modifications of histones, also called histone code, and nucleosome remodeling. The protein is Histone H4 type VIII (H4-VIII) of Gallus gallus (Chicken).